Reading from the N-terminus, the 223-residue chain is MTSEVIEDEKQFYSKAKTYWKQIPPTVDGMLGGYGHISSIDINSSRKFLQRFLREGPNKTGTSCALDCGAGIGRITKRLLLPLFREVDMVDITEDFLVQAKTYLGEEGKRVRNYFCCGLQDFTPEPDSYDVIWIQWVIGHLTDQHLAEFLRRCKGSLRPNGIIVIKDNMAQEGVILDDVDSSVCRDLDVVRRIICSAGLSLLAEERQENLPDEIYHVYSFALR.

M1 carries the N-acetylmethionine modification. T2 carries the N-acetylthreonine; in N-terminal Xaa-Pro-Lys N-methyltransferase 1, N-terminally processed modification. Residues G69, R74, 91–93 (DIT), 119–120 (LQ), and Q135 contribute to the S-adenosyl-L-methionine site.

Belongs to the methyltransferase superfamily. NTM1 family.

The protein resides in the nucleus. The catalysed reaction is N-terminal L-alanyl-L-prolyl-L-lysyl-[protein] + 3 S-adenosyl-L-methionine = N-terminal N,N,N-trimethyl-L-alanyl-L-prolyl-L-lysyl-[protein] + 3 S-adenosyl-L-homocysteine + 3 H(+). It catalyses the reaction N-terminal L-seryl-L-prolyl-L-lysyl-[protein] + 3 S-adenosyl-L-methionine = N-terminal N,N,N-trimethyl-L-seryl-L-prolyl-L-lysyl-[protein] + 3 S-adenosyl-L-homocysteine + 3 H(+). It carries out the reaction N-terminal L-prolyl-L-prolyl-L-lysyl-[protein] + 2 S-adenosyl-L-methionine = N-terminal N,N-dimethyl-L-prolyl-L-prolyl-L-lysyl-[protein] + 2 S-adenosyl-L-homocysteine + 2 H(+). In terms of biological role, distributive alpha-N-methyltransferase that methylates the N-terminus of target proteins containing the N-terminal motif [Ala/Gly/Pro/Ser]-Pro-Lys when the initiator Met is cleaved. Specifically catalyzes mono-, di- or tri-methylation of the exposed alpha-amino group of the Ala, Gly or Ser residue in the [Ala/Gly/Ser]-Pro-Lys motif and mono- or di-methylation of Pro in the Pro-Pro-Lys motif. Some of the substrates may be primed by NTMT2-mediated monomethylation. Catalyzes the trimethylation of the N-terminal Gly in CENPA (after removal of Met-1). Responsible for the N-terminal methylation of KLHL31, MYL2, MYL3, RB1, RCC1, RPL23A and SET. Required during mitosis for normal bipolar spindle formation and chromosome segregation via its action on RCC1. The sequence is that of N-terminal Xaa-Pro-Lys N-methyltransferase 1 (NTMT1) from Homo sapiens (Human).